Reading from the N-terminus, the 94-residue chain is Venom peptide SjAPI (94 aa).

The first 24 residues, 1–24, serve as a signal peptide directing secretion; sequence MKWGALLCIFGFLAFCSVLDRGLG. Positions 25-30 are excised as a propeptide; sequence WIPDIW. 5 cysteine pairs are disulfide-bonded: Cys-33-Cys-70, Cys-43-Cys-66, Cys-47-Cys-62, Cys-51-Cys-92, and Cys-72-Cys-86. In terms of domain architecture, TIL spans 33-92; it reads CSSKNEEFQQCGSSCPETCANHKNPEPKSCAAVCFVGCVCKPGFIRDDLKGSICVKPEDC. The protease binding loop stretch occupies residues 63–65; it reads AAV.

Belongs to the serine protease inhibitor-like (TIL domain-containing) family. As to expression, expressed by the venom gland.

The protein localises to the secreted. Its function is as follows. Recombinant protein inhibits both alpha-chymotrypsin (Ki=97.1 nM) and elastase (Ki=3700 nM). The sequence is that of Venom peptide SjAPI from Scorpiops jendeki (Scorpion).